The following is a 217-amino-acid chain: DNA transformation protein TfoX (217 aa).

The protein belongs to the Sxy/TfoX family.

Functionally, required for DNA transformation. Positively regulates genes required for DNA transformation (late competence-specific genes) in association with CRP. Required for expression of the late competence-specific gene, com101A. Required for expression of the dprABC operon. This chain is DNA transformation protein TfoX, found in Haemophilus influenzae (strain ATCC 51907 / DSM 11121 / KW20 / Rd).